Reading from the N-terminus, the 196-residue chain is Pyridoxal 5'-phosphate synthase subunit PdxT (196 aa).

52–54 (GES) contributes to the L-glutamine binding site. Residue cysteine 84 is the Nucleophile of the active site. L-glutamine contacts are provided by residues arginine 113 and 141-142 (IR). Residues histidine 178 and glutamate 180 each act as charge relay system in the active site.

This sequence belongs to the glutaminase PdxT/SNO family. In the presence of PdxS, forms a dodecamer of heterodimers. Only shows activity in the heterodimer.

It carries out the reaction aldehydo-D-ribose 5-phosphate + D-glyceraldehyde 3-phosphate + L-glutamine = pyridoxal 5'-phosphate + L-glutamate + phosphate + 3 H2O + H(+). It catalyses the reaction L-glutamine + H2O = L-glutamate + NH4(+). The protein operates within cofactor biosynthesis; pyridoxal 5'-phosphate biosynthesis. Functionally, catalyzes the hydrolysis of glutamine to glutamate and ammonia as part of the biosynthesis of pyridoxal 5'-phosphate. The resulting ammonia molecule is channeled to the active site of PdxS. The polypeptide is Pyridoxal 5'-phosphate synthase subunit PdxT (Pyrococcus horikoshii (strain ATCC 700860 / DSM 12428 / JCM 9974 / NBRC 100139 / OT-3)).